Here is a 397-residue protein sequence, read N- to C-terminus: Methylthioribose kinase (397 aa).

ATP is bound by residues asparagine 43, lysine 60, and 114–116; that span reads EDL. Aspartate 232 contributes to the substrate binding site. 249 to 251 provides a ligand contact to ATP; it reads DPE. Substrate is bound at residue arginine 340.

The protein belongs to the methylthioribose kinase family. In terms of assembly, homodimer.

It catalyses the reaction 5-(methylsulfanyl)-D-ribose + ATP = 5-(methylsulfanyl)-alpha-D-ribose 1-phosphate + ADP + H(+). It functions in the pathway amino-acid biosynthesis; L-methionine biosynthesis via salvage pathway; S-methyl-5-thio-alpha-D-ribose 1-phosphate from S-methyl-5'-thioadenosine (hydrolase route): step 2/2. In terms of biological role, catalyzes the phosphorylation of methylthioribose into methylthioribose-1-phosphate. The chain is Methylthioribose kinase from Bacillus pumilus (strain SAFR-032).